The primary structure comprises 602 residues: MYSAHTPWYDGQVMDYPRRTIACGELRRCHVGTVVVLNGWVHRKRSHGTVSFFNMRDRSGIVQVIVSQEENASLWSTVNRIRLECCLAVEGVVRERPPSMINRALHTGEVEVHARTLYVLSENAVLPFRVDDVVHAHEDIRLKYRYLDLRSQRMQERIALRSRVALAIRQFLSMKGFIEIETPTFICSTPEGARDFVVPSRVCPGRFYALPQSPQLYKQLLMVAGFDRYFQLARCYRDEDARGDRQPEFTQIDLEMSFVSRDDVMRVNEDMLRYVFRTSIGVELPTFFPRLTYAQALDQYGTDKPDMRFKPVLQNADFMGMLGTFTPFEEVVAQGGSIRALVLPGKARCYSRRQIEALESIARAHEAHHLFWLKATGGGLEGGIARFFAGVESEVRRRLSAQDEDLLLFVADCRHRVCCVALGAVRSALIRDESFPEKELFSFVWIVDFPLFEWNPAENKWDPAHHMFSAPQEQYLETLEQDPGSVKGDLYDLVLNGYELASGSIRIHDTQLQKRIFKIVGLDPEEAGEKFGFLTEAFKYGAPPHGGIAHGLDRLVMLMTGSESIRDVIAFPKNTLAASPLDNCPSVLDKRQLDELHLTVHV.

L-aspartate is bound at residue Glu-191. The interval 215 to 218 (QLYK) is aspartate. Arg-237 lines the L-aspartate pocket. ATP-binding positions include 237–239 (RDE) and Gln-246. Position 465 (His-465) interacts with L-aspartate. Residue Glu-499 coordinates ATP. Residue Arg-506 participates in L-aspartate binding. ATP is bound at residue 551-554 (GLDR).

It belongs to the class-II aminoacyl-tRNA synthetase family. Type 1 subfamily. In terms of assembly, homodimer.

It is found in the cytoplasm. It catalyses the reaction tRNA(Asx) + L-aspartate + ATP = L-aspartyl-tRNA(Asx) + AMP + diphosphate. Aspartyl-tRNA synthetase with relaxed tRNA specificity since it is able to aspartylate not only its cognate tRNA(Asp) but also tRNA(Asn). Reaction proceeds in two steps: L-aspartate is first activated by ATP to form Asp-AMP and then transferred to the acceptor end of tRNA(Asp/Asn). The protein is Aspartate--tRNA(Asp/Asn) ligase of Treponema pallidum (strain Nichols).